A 152-amino-acid chain; its full sequence is Neuropeptide W (152 aa).

A signal peptide spans 1 to 32 (MGARGPGPGATARRRLLALLLLLLLLPLPARA). The propeptide occupies 65–152 (ALRPAAGPLA…LGASSWTSAE (88 aa)). Disordered regions lie at residues 79–108 (GQDVPPRGPSARNALSPGPAPRDAPLLPPG) and 122–152 (SGIPVSAPRSPRARGSEPQPELGASSWTSAE). Pro residues predominate over residues 96-106 (GPAPRDAPLLP).

This sequence belongs to the neuropeptide B/W family.

The protein resides in the secreted. Its function is as follows. Plays a regulatory role in the organization of neuroendocrine signals accessing the anterior pituitary gland. Stimulates water drinking and food intake. May play a role in the hypothalamic response to stress. The protein is Neuropeptide W (NPW) of Sus scrofa (Pig).